We begin with the raw amino-acid sequence, 120 residues long: Small ribosomal subunit protein bS6 (120 aa).

The interval 93–120 (KKADTAPSSMMKTVEREEARKASQTEQA) is disordered. Residues 105–120 (TVEREEARKASQTEQA) show a composition bias toward basic and acidic residues.

The protein belongs to the bacterial ribosomal protein bS6 family.

Binds together with bS18 to 16S ribosomal RNA. This Delftia acidovorans (strain DSM 14801 / SPH-1) protein is Small ribosomal subunit protein bS6.